Reading from the N-terminus, the 328-residue chain is D-cysteine desulfhydrase (328 aa).

The residue at position 51 (lysine 51) is an N6-(pyridoxal phosphate)lysine.

It belongs to the ACC deaminase/D-cysteine desulfhydrase family. Homodimer. Pyridoxal 5'-phosphate is required as a cofactor.

It carries out the reaction D-cysteine + H2O = hydrogen sulfide + pyruvate + NH4(+) + H(+). Functionally, catalyzes the alpha,beta-elimination reaction of D-cysteine and of several D-cysteine derivatives. It could be a defense mechanism against D-cysteine. The protein is D-cysteine desulfhydrase of Salmonella typhi.